The primary structure comprises 516 residues: 3-phosphoshikimate 1-carboxyvinyltransferase, chloroplastic (516 aa).

The N-terminal 72 residues, 1–72, are a transit peptide targeting the chloroplast; it reads MAQSSRICHG…KVTASVSTSE (72 aa). The 3-phosphoshikimate site is built by K95, S96, and R100. A phosphoenolpyruvate-binding site is contributed by K95. G173 and R203 together coordinate phosphoenolpyruvate. 3-phosphoshikimate is bound by residues S250, S251, Q252, S278, D403, and K430. Q252 lines the phosphoenolpyruvate pocket. D403 (proton acceptor) is an active-site residue. Positions 434, 476, and 501 each coordinate phosphoenolpyruvate.

This sequence belongs to the EPSP synthase family.

It localises to the plastid. The protein resides in the chloroplast. It carries out the reaction 3-phosphoshikimate + phosphoenolpyruvate = 5-O-(1-carboxyvinyl)-3-phosphoshikimate + phosphate. It functions in the pathway metabolic intermediate biosynthesis; chorismate biosynthesis; chorismate from D-erythrose 4-phosphate and phosphoenolpyruvate: step 6/7. Functionally, catalyzes the transfer of the enolpyruvyl moiety of phosphoenolpyruvate (PEP) to the 5-hydroxyl of shikimate-3-phosphate (S3P) to produce enolpyruvyl shikimate-3-phosphate and inorganic phosphate. This chain is 3-phosphoshikimate 1-carboxyvinyltransferase, chloroplastic, found in Brassica napus (Rape).